The following is a 539-amino-acid chain: Sphingosine-1-phosphate lyase (539 aa).

The first 46 residues, 1 to 46, serve as a signal peptide directing secretion; that stretch reads MELAMDFALRLRDAANHHLSRYEPLVLLAAPLLALLAARTLHAAAA. Topologically, residues 47–54 are lumenal; it reads AVADRGLR. A helical transmembrane segment spans residues 55 to 75; the sequence is TVLLALAMTAIKLLPGVSAYI. Topologically, residues 76–539 are cytoplasmic; it reads NAEKRKVVDQ…LLVEFMDASC (464 aa). N6-(pyridoxal phosphate)lysine is present on Lys344.

Belongs to the group II decarboxylase family. Sphingosine-1-phosphate lyase subfamily. Pyridoxal 5'-phosphate serves as cofactor.

Its subcellular location is the endoplasmic reticulum membrane. The enzyme catalyses sphinganine 1-phosphate = hexadecanal + phosphoethanolamine. Its pathway is lipid metabolism; sphingolipid metabolism. Functionally, cleaves phosphorylated sphingoid bases (PSBs), such as sphingosine-1-phosphate, into fatty aldehydes and phosphoethanolamine. Elevates stress-induced ceramide production and apoptosis. This is Sphingosine-1-phosphate lyase (SPL) from Oryza sativa subsp. japonica (Rice).